We begin with the raw amino-acid sequence, 467 residues long: 3-isopropylmalate dehydratase large subunit (467 aa).

Residues Cys-348, Cys-409, and Cys-412 each coordinate [4Fe-4S] cluster. The segment at 423–449 (NERSISTSNRNFEGRQGKGSRTHLASP) is disordered.

The protein belongs to the aconitase/IPM isomerase family. LeuC type 1 subfamily. As to quaternary structure, heterodimer of LeuC and LeuD. It depends on [4Fe-4S] cluster as a cofactor.

It catalyses the reaction (2R,3S)-3-isopropylmalate = (2S)-2-isopropylmalate. Its pathway is amino-acid biosynthesis; L-leucine biosynthesis; L-leucine from 3-methyl-2-oxobutanoate: step 2/4. Functionally, catalyzes the isomerization between 2-isopropylmalate and 3-isopropylmalate, via the formation of 2-isopropylmaleate. This Bifidobacterium longum subsp. infantis (strain ATCC 15697 / DSM 20088 / JCM 1222 / NCTC 11817 / S12) protein is 3-isopropylmalate dehydratase large subunit.